The following is a 309-amino-acid chain: Probable nitrogen assimilation transcriptional activator (309 aa).

The region spanning 1 to 57 (MRLEQLQAFLKVAELGSFQQAALQSEVTQSTISRQIQGLESALKCQLFHRGAQAKLT) is the HTH lysR-type domain. The H-T-H motif DNA-binding region spans 18-38 (FQQAALQSEVTQSTISRQIQG).

The protein belongs to the LysR transcriptional regulatory family.

Seems to regulate utilization of fixed nitrogen by controlling the expression of a certain gene(s) involved in nitrogen metabolism. In Synechocystis sp. (strain ATCC 27184 / PCC 6803 / Kazusa), this protein is Probable nitrogen assimilation transcriptional activator (ntcB).